The primary structure comprises 1091 residues: Protein CTR9 homolog (1091 aa).

Alanine 2 is modified (N-acetylalanine). 16 TPR repeats span residues 90–127 (GAYY…DMHE), 128–161 (PSTW…APDN), 163–195 (PALL…FPGC), 197–230 (AAVR…DPDN), 232–267 (EALV…YPYC), 305–338 (SHSF…TNNN), 343–376 (VFPY…YPDN), 377–410 (CETL…DPRD), 412–443 (QAFV…MKKG), 449–482 (IEVL…GIWI), 558–591 (IDAY…DDKN), 593–625 (NALS…TDGK), 640–673 (AAMR…HNSN), 674–707 (MYAA…ASGS), 713–746 (PDVW…FFYN), and 749–782 (SQIL…TPSN). A disordered region spans residues 919–1091 (FQRIKEQWKS…EEEEEEEEAN (173 aa)). A compositionally biased stretch (basic residues) spans 951-965 (ERRRKKGGKRRKKDK). 4 stretches are compositionally biased toward acidic residues: residues 974 to 993 (DDEE…DEDA), 1003 to 1016 (MTTQ…DDDA), 1026 to 1035 (EDPDVDDDEV), and 1080 to 1091 (NMEEEEEEEEAN).

Component of the nuclear PAF1 complex (PAF1C), which consists of VIP2/ELF7/PAF1, VIP3/SKI8/WDR61, VIP4/LEO1, VIP5/RTF1, VIP6/ELF8/CTR9 and CDC73. Interacts with VIP3 and VIP4. In terms of tissue distribution, expressed in roots, leaves and shoot apex.

It localises to the nucleus. In terms of biological role, component of the PAF1 complex (PAF1C) which is involved in histone modifications such as methylation on histone H3 'Lys-4' (H3K4me3). Involved in regulation of flowering time. Required for the expression of the MADS box genes and flowering repressors FLC, AGL27/FLM and AGL31/MAF2. Required for histone H3 trimethylation on 'Lys-4' H3K4me3 at the FLC and AGL27/FLM loci. Involved in the control of seed dormancy and germination. This is Protein CTR9 homolog from Arabidopsis thaliana (Mouse-ear cress).